A 253-amino-acid chain; its full sequence is MGLGRGQSPLLMALLLLLACLQMGMSLERISYVPQLSSATLAGRLTQSTFTLEQPRGQFSHPSISDSDAIWLVVAHSNATQKFTAPQKVEDTPVPADFPQRGYYLTLRASRALYPGGPPSNQLRVLRVGNDTRCSPRTRGCNRPLPGPGPYRVKFLVMSDRGPMAETEWSSETRLQQAEVLQAAPGPQTAGTVVIIAILSVLLAVLLAALLALLIFTWYDTCGSTPISGPGELVFVRKYDTHHMSRPSTVGGS.

The signal sequence occupies residues 1–26 (MGLGRGQSPLLMALLLLLACLQMGMS). At 27-194 (LERISYVPQL…PGPQTAGTVV (168 aa)) the chain is on the extracellular side. N78 and N130 each carry an N-linked (GlcNAc...) asparagine glycan. A helical transmembrane segment spans residues 195-215 (IIAILSVLLAVLLAALLALLI). At 216–253 (FTWYDTCGSTPISGPGELVFVRKYDTHHMSRPSTVGGS) the chain is on the cytoplasmic side.

The protein belongs to the uroplakin-3 family.

The protein localises to the membrane. This is Uroplakin-3b-like protein 1 from Bos taurus (Bovine).